The sequence spans 556 residues: MASRRVLSSLLRSSSGRSAAKLVNRNPRLPSPSPARHAAPCSYLLGRVAEYATSSPASSAAPSSAPAKDEGKKTYDYGGKGAIGRVCQVIGAIVDVRFEDQEGLPPIMTSLEVQDHPTRLVLEVSHHLGQNVVRTIAMDGTEGLVRGRKVLNTGAPITVPVGRATLGRIMNVLGEPIDERGEIKTEHYLPIHRDAPALVDLATGQEILATGIKVVDLLAPYQRGGKIGLFGGAGVGKTVLIMELINNVAKAHGGFSVFAGVGERTREGNDLYREMIESGVIKLGEKQSESKCALVYGQMNEPPGARARVGLTGLTVAEYFRDAEGQDVLLFIDNIFRFTQANSEVSALLGRIPSAVGYQPTLASDLGALQERITTTKKGSITSVQAIYVPADDLTDPAPATTFAHLDATTVLSRQISELGIYPAVDPLDSTSRMLSPHILGEEHYNTARGVQKVLQNYKNLQDIIAILGMDELSEDDKLTVARARKIQRFLSQPFHVAEIFTGAPGKYVDLKENINSFQGLLDGKYDDLSEQSFYMVGGIDEVVAKAEKIAKESAA.

The segment covering 1–20 (MASRRVLSSLLRSSSGRSAA) has biased composition (low complexity). The disordered stretch occupies residues 1–37 (MASRRVLSSLLRSSSGRSAAKLVNRNPRLPSPSPARH). A mitochondrion-targeting transit peptide spans 1–51 (MASRRVLSSLLRSSSGRSAAKLVNRNPRLPSPSPARHAAPCSYLLGRVAEY). Phosphoserine is present on S59. An ATP-binding site is contributed by 231–238 (GGAGVGKT).

Belongs to the ATPase alpha/beta chains family. F-type ATPases have 2 components, CF(1) - the catalytic core - and CF(0) - the membrane proton channel. CF(1) has five subunits: alpha(3), beta(3), gamma(1), delta(1), epsilon(1). CF(0) has three main subunits: a, b and c.

Its subcellular location is the mitochondrion. It is found in the mitochondrion inner membrane. The catalysed reaction is ATP + H2O + 4 H(+)(in) = ADP + phosphate + 5 H(+)(out). Its function is as follows. Mitochondrial membrane ATP synthase (F(1)F(0) ATP synthase or Complex V) produces ATP from ADP in the presence of a proton gradient across the membrane which is generated by electron transport complexes of the respiratory chain. F-type ATPases consist of two structural domains, F(1) - containing the extramembraneous catalytic core, and F(0) - containing the membrane proton channel, linked together by a central stalk and a peripheral stalk. During catalysis, ATP synthesis in the catalytic domain of F(1) is coupled via a rotary mechanism of the central stalk subunits to proton translocation. Subunits alpha and beta form the catalytic core in F(1). Rotation of the central stalk against the surrounding alpha(3)beta(3) subunits leads to hydrolysis of ATP in three separate catalytic sites on the beta subunits. This Arabidopsis thaliana (Mouse-ear cress) protein is ATP synthase subunit beta-2, mitochondrial.